The sequence spans 154 residues: MVFVKGQKKATKGSTQSGEEKTASTTPKVTKTPTEGGEKKRKKRKSDYTSFSTYIHKLLKQITPPTNAKSNEKGDRKFTISSKAMSVMNSFVHDIFDRIATEASGLAKKKKRQTLHSRDIQVAVRIILTGELAKHAILQGMTAVNKYNPTESKN.

Residues 1–11 show a composition bias toward basic residues; that stretch reads MVFVKGQKKAT. The segment at 1–48 is disordered; the sequence is MVFVKGQKKATKGSTQSGEEKTASTTPKVTKTPTEGGEKKRKKRKSDY. Over residues 12-27 the composition is skewed to polar residues; it reads KGSTQSGEEKTASTTP.

It belongs to the histone H2B family. The nucleosome is a histone octamer containing two molecules each of H2A, H2B, H3 and H4 assembled in one H3-H4 heterotetramer and two H2A-H2B heterodimers. The octamer wraps approximately 147 bp of DNA.

It localises to the nucleus. Its subcellular location is the chromosome. Core component of nucleosome which plays a central role in DNA double strand break (DSB) repair. Nucleosomes wrap and compact DNA into chromatin, limiting DNA accessibility to the cellular machineries which require DNA as a template. Histones thereby play a central role in transcription regulation, DNA repair, DNA replication and chromosomal stability. DNA accessibility is regulated via a complex set of post-translational modifications of histones, also called histone code, and nucleosome remodeling. The sequence is that of Histone H2B.v3 (H2Bv3) from Dictyostelium discoideum (Social amoeba).